Reading from the N-terminus, the 198-residue chain is Probable molybdenum cofactor guanylyltransferase (198 aa).

GTP contacts are provided by residues 11-13 (LAG), Lys-23, Asp-71, and Asp-102. Mg(2+) is bound at residue Asp-102.

Belongs to the MobA family. Mg(2+) serves as cofactor.

Its subcellular location is the cytoplasm. It catalyses the reaction Mo-molybdopterin + GTP + H(+) = Mo-molybdopterin guanine dinucleotide + diphosphate. In terms of biological role, transfers a GMP moiety from GTP to Mo-molybdopterin (Mo-MPT) cofactor (Moco or molybdenum cofactor) to form Mo-molybdopterin guanine dinucleotide (Mo-MGD) cofactor. The polypeptide is Probable molybdenum cofactor guanylyltransferase (Halalkalibacterium halodurans (strain ATCC BAA-125 / DSM 18197 / FERM 7344 / JCM 9153 / C-125) (Bacillus halodurans)).